A 307-amino-acid polypeptide reads, in one-letter code: 2-dehydropantoate 2-reductase (307 aa).

Residues 7–12, Asn-102, and Ala-128 contribute to the NADP(+) site; that span reads GSGAMG. Asn-102 serves as a coordination point for substrate. Residue Lys-184 is the Proton donor of the active site. Substrate contacts are provided by Asn-188, Asn-192, and Ser-255. Glu-268 contributes to the NADP(+) binding site.

The protein belongs to the ketopantoate reductase family.

The protein resides in the cytoplasm. It carries out the reaction (R)-pantoate + NADP(+) = 2-dehydropantoate + NADPH + H(+). It functions in the pathway cofactor biosynthesis; (R)-pantothenate biosynthesis; (R)-pantoate from 3-methyl-2-oxobutanoate: step 2/2. Functionally, catalyzes the NADPH-dependent reduction of ketopantoate into pantoic acid. This is 2-dehydropantoate 2-reductase (apbA) from Streptococcus pyogenes serotype M18 (strain MGAS8232).